Consider the following 297-residue polypeptide: Acetylglutamate kinase (297 aa).

Substrate contacts are provided by residues 70–71 (GG), arginine 92, and asparagine 194.

Belongs to the acetylglutamate kinase family. ArgB subfamily.

It is found in the cytoplasm. The enzyme catalyses N-acetyl-L-glutamate + ATP = N-acetyl-L-glutamyl 5-phosphate + ADP. It participates in amino-acid biosynthesis; L-arginine biosynthesis; N(2)-acetyl-L-ornithine from L-glutamate: step 2/4. Catalyzes the ATP-dependent phosphorylation of N-acetyl-L-glutamate. The sequence is that of Acetylglutamate kinase from Janthinobacterium sp. (strain Marseille) (Minibacterium massiliensis).